Here is a 218-residue protein sequence, read N- to C-terminus: Large ribosomal subunit protein uL3 (218 aa).

The tract at residues 133–158 is disordered; it reads RGQGASHGAQAVHRRPGSIGGCATPG.

This sequence belongs to the universal ribosomal protein uL3 family. As to quaternary structure, part of the 50S ribosomal subunit. Forms a cluster with proteins L14 and L19.

Functionally, one of the primary rRNA binding proteins, it binds directly near the 3'-end of the 23S rRNA, where it nucleates assembly of the 50S subunit. This Mycolicibacterium vanbaalenii (strain DSM 7251 / JCM 13017 / BCRC 16820 / KCTC 9966 / NRRL B-24157 / PYR-1) (Mycobacterium vanbaalenii) protein is Large ribosomal subunit protein uL3.